The sequence spans 366 residues: Beta sliding clamp (366 aa).

The protein belongs to the beta sliding clamp family. Forms a ring-shaped head-to-tail homodimer around DNA which binds and tethers DNA polymerases and other proteins to the DNA. The DNA replisome complex has a single clamp-loading complex (3 tau and 1 each of delta, delta', psi and chi subunits) which binds 3 Pol III cores (1 core on the leading strand and 2 on the lagging strand) each with a beta sliding clamp dimer. Additional proteins in the replisome are other copies of gamma, psi and chi, Ssb, DNA helicase and RNA primase.

The protein resides in the cytoplasm. Its function is as follows. Confers DNA tethering and processivity to DNA polymerases and other proteins. Acts as a clamp, forming a ring around DNA (a reaction catalyzed by the clamp-loading complex) which diffuses in an ATP-independent manner freely and bidirectionally along dsDNA. Initially characterized for its ability to contact the catalytic subunit of DNA polymerase III (Pol III), a complex, multichain enzyme responsible for most of the replicative synthesis in bacteria; Pol III exhibits 3'-5' exonuclease proofreading activity. The beta chain is required for initiation of replication as well as for processivity of DNA replication. This chain is Beta sliding clamp (dnaN), found in Chlamydia muridarum (strain MoPn / Nigg).